The primary structure comprises 277 residues: Ras suppressor protein 1 (277 aa).

The interval 1–23 (MSKSLKKLVEESREKNQPEVDMS) is disordered. Ser2 is subject to N-acetylserine. Over residues 7 to 23 (KLVEESREKNQPEVDMS) the composition is skewed to basic and acidic residues. LRR repeat units lie at residues 41 to 63 (HITQ…AELK), 64 to 85 (NLEV…ISSL), 87 to 108 (KLKH…FGSS), 110 to 133 (LLEV…FFYL), 135 to 156 (TLRA…IGKL), 158 to 179 (KLQI…IGEL), and 181 to 202 (QLKE…LGNL). The tract at residues 250–277 (MQANPEPPKKNNDKSKKISRKPLAAKNK) is disordered. Residues 256 to 265 (PPKKNNDKSK) are compositionally biased toward basic and acidic residues.

In terms of biological role, potentially plays a role in the Ras signal transduction pathway. Capable of suppressing v-Ras transformation in vitro. The polypeptide is Ras suppressor protein 1 (Rsu1) (Mus musculus (Mouse)).